The following is a 915-amino-acid chain: Protein ZDS1 (915 aa).

6 disordered regions span residues 1–28 (MSNR…KRKS), 69–134 (GESS…KKGV), 179–261 (LSDN…SETV), 310–330 (GSYS…EGDI), 412–433 (KSPF…SIGD), and 464–807 (KVRN…SILP). The span at 74-93 (RRSWSGTTSSSASMPSDTTT) shows a compositional bias: low complexity. A compositionally biased stretch (polar residues) spans 115-125 (GIESSNKTKQG). Positions 202-212 (DKESQSYENKE) are enriched in basic and acidic residues. The residue at position 229 (serine 229) is a Phosphoserine. Acidic residues predominate over residues 243–252 (EFDDNEDDDN). The segment covering 313–327 (SDKKDQPQPEGHYDE) has biased composition (basic and acidic residues). Residues 464 to 480 (KVRNDTVEQDLELREGT) show a composition bias toward basic and acidic residues. Acidic residues predominate over residues 515–530 (DDNEENQGDDENEENV). Composition is skewed to basic and acidic residues over residues 531-541 (DSQRMELDNSK) and 552-562 (EKTEVSNKEEM). 2 stretches are compositionally biased toward low complexity: residues 565-574 (SSTSTATSQT) and 597-609 (SSSP…SSPS). 2 stretches are compositionally biased toward basic residues: residues 618–627 (VRVRKSKKLG) and 642–656 (NRPR…RHGS). Residues 668 to 679 (QPQQQIPLQPQL) are compositionally biased toward low complexity. Over residues 696–710 (LPQLQPAVSVSSTKS) the composition is skewed to polar residues. Composition is skewed to basic and acidic residues over residues 711–721 (NSRDREEEEAK) and 742–751 (VQKENTDEQK). Residues 752–793 (AQLQAPAQEQVQTSVPVQASAPVQNSAPVQTSAPVEASAQTQ) are compositionally biased toward polar residues.

To yeast ZDS2/MCS1. As to quaternary structure, interacts with BCY1, DBP5, GFD1 and SKG6.

It is found in the cytoplasm. Has a role in establishing cell polarity. Together with cAMP-dependent protein kinase regulatory subunit BCY1, provides a negative feedback control on the cell wall integrity-signaling pathway by acting as a negative regulator of MAP kinase SLT2/MPK1. In heat-stressed cells appears to play a role in localizing BCY1 to the cytoplasm. Seems to interact with, and down-regulate, CDC42. Also acts as a suppressor of PKC1. May act as an integration point for distinct signaling pathways helping to maintain a balance among these different pathways. Functionally, when associated with DBP5, GFD1 and nucleoporins at the cytosolic fibrils of the nuclear pore complex, is required for mRNA export form the nucleus. This is Protein ZDS1 (ZDS1) from Saccharomyces cerevisiae (strain ATCC 204508 / S288c) (Baker's yeast).